A 151-amino-acid polypeptide reads, in one-letter code: 3-hydroxyacyl-[acyl-carrier-protein] dehydratase FabZ (151 aa).

Histidine 56 is an active-site residue.

It belongs to the thioester dehydratase family. FabZ subfamily.

The protein resides in the cytoplasm. The catalysed reaction is a (3R)-hydroxyacyl-[ACP] = a (2E)-enoyl-[ACP] + H2O. Functionally, involved in unsaturated fatty acids biosynthesis. Catalyzes the dehydration of short chain beta-hydroxyacyl-ACPs and long chain saturated and unsaturated beta-hydroxyacyl-ACPs. This is 3-hydroxyacyl-[acyl-carrier-protein] dehydratase FabZ from Rhodopseudomonas palustris (strain ATCC BAA-98 / CGA009).